Reading from the N-terminus, the 512-residue chain is Maturase K (512 aa).

This sequence belongs to the intron maturase 2 family. MatK subfamily.

It is found in the plastid. The protein localises to the chloroplast. Its function is as follows. Usually encoded in the trnK tRNA gene intron. Probably assists in splicing its own and other chloroplast group II introns. In Wolffiella gladiata (Florida mud-midget), this protein is Maturase K.